Consider the following 1133-residue polypeptide: DNA repair protein rad8 (1133 aa).

Disordered regions lie at residues 1-34 (MKRK…SKPN) and 392-413 (PEAR…EEDV). Ser-18 is subject to Phosphoserine. The Helicase ATP-binding domain maps to 516–705 (PNSMPYHRGG…YSLIKFMRYE (190 aa)). 529 to 536 (DEMGLGKT) serves as a coordination point for ATP. The short motif at 656–659 (DEGH) is the DEGH box element. The segment at 877–923 (CPICCNEPIQNPLLLNCKHACCGDCLSEHIQYQKRRNIIPPLCHTCR) adopts an RING-type zinc-finger fold. Residues 971–1125 (QLRQLTHSSE…EGKQQVQSIE (155 aa)) enclose the Helicase C-terminal domain.

The protein belongs to the SNF2/RAD54 helicase family.

The protein resides in the cytoplasm. The protein localises to the nucleus. Functionally, probable helicase, member of the UBC2/RAD6 epistasis group. Functions with DNA repair protein rad18 in error-free postreplication DNA repair. Involved in the maintenance of wild-type rates of instability of simple repetitive sequences such as poly(GT) repeats. Plays a role in surviving topoisomerase-mediated DNA damage. This chain is DNA repair protein rad8, found in Schizosaccharomyces pombe (strain 972 / ATCC 24843) (Fission yeast).